Consider the following 91-residue polypeptide: Protein translocase subunit SecG (91 aa).

2 consecutive transmembrane segments (helical) span residues 16–36 (HTFLIVLLIIDCIALITVVLL) and 71–91 (LTIILSILFFVLMICISYLGM).

Belongs to the SecG family. Component of the Sec protein translocase complex. Heterotrimer consisting of SecY, SecE and SecG subunits. The heterotrimers can form oligomers, although 1 heterotrimer is thought to be able to translocate proteins. Interacts with SecDF, and other proteins may be involved. The channel interacts with SecA via subunit SecY. Also part of the accessory SecA2/SecY2 protein translocation apparatus required to export cell wall protein GspB.

The protein resides in the cell membrane. In terms of biological role, subunit of the protein translocation channel SecYEG. While not essential, it considerably increases the export efficiency of extracellular proteins. The polypeptide is Protein translocase subunit SecG (Staphylococcus aureus (strain NCTC 8325 / PS 47)).